The sequence spans 115 residues: Probable non-functional immunoglobulin heavy variable 8-51-1 (115 aa).

Residues 1 to 17 (MLVCVLLYSFRLFGIQG) form the signal peptide. Residues 18–42 (EAQLTESGGDLVHLEGPLRLSCAAS) form a framework-1 region. Residues 19-115 (AQLTESGGDL…QNMAAFNCAG (97 aa)) enclose the Ig-like domain. Residues 43–50 (WFTFSIYE) form a complementarity-determining-1 region. The interval 51-67 (IHWVCQASGKGLEWVAV) is framework-2. Cysteines 55 and 113 form a disulfide. Positions 68–75 (IWRGESHQ) are complementarity-determining-2. The interval 76–113 (YNADYVRGRLTTSRDNTKYMLYMQMISLRTQNMAAFNC) is framework-3. The segment at 114–115 (AG) is complementarity-determining-3.

In terms of assembly, immunoglobulins are composed of two identical heavy chains and two identical light chains; disulfide-linked.

Its subcellular location is the secreted. The protein localises to the cell membrane. Its function is as follows. Probable non-functional open reading frame (ORF) of V region of the variable domain of immunoglobulin heavy chains. Non-functional ORF generally cannot participate in the synthesis of a productive immunoglobulin chain due to altered V-(D)-J or switch recombination and/or splicing site (at mRNA level) and/or conserved amino acid change (protein level). Immunoglobulins, also known as antibodies, are membrane-bound or secreted glycoproteins produced by B lymphocytes. In the recognition phase of humoral immunity, the membrane-bound immunoglobulins serve as receptors which, upon binding of a specific antigen, trigger the clonal expansion and differentiation of B lymphocytes into immunoglobulins-secreting plasma cells. Secreted immunoglobulins mediate the effector phase of humoral immunity, which results in the elimination of bound antigens. The antigen binding site is formed by the variable domain of one heavy chain, together with that of its associated light chain. Thus, each immunoglobulin has two antigen binding sites with remarkable affinity for a particular antigen. The variable domains are assembled by a process called V-(D)-J rearrangement and can then be subjected to somatic hypermutations which, after exposure to antigen and selection, allow affinity maturation for a particular antigen. This Homo sapiens (Human) protein is Probable non-functional immunoglobulin heavy variable 8-51-1.